The following is a 510-amino-acid chain: ATP synthase subunit alpha (510 aa).

170 to 177 (GDRQTGKT) lines the ATP pocket.

The protein belongs to the ATPase alpha/beta chains family. In terms of assembly, F-type ATPases have 2 components, CF(1) - the catalytic core - and CF(0) - the membrane proton channel. CF(1) has five subunits: alpha(3), beta(3), gamma(1), delta(1), epsilon(1). CF(0) has three main subunits: a(1), b(2) and c(9-12). The alpha and beta chains form an alternating ring which encloses part of the gamma chain. CF(1) is attached to CF(0) by a central stalk formed by the gamma and epsilon chains, while a peripheral stalk is formed by the delta and b chains.

The protein localises to the cell inner membrane. It carries out the reaction ATP + H2O + 4 H(+)(in) = ADP + phosphate + 5 H(+)(out). In terms of biological role, produces ATP from ADP in the presence of a proton gradient across the membrane. The alpha chain is a regulatory subunit. The protein is ATP synthase subunit alpha of Caulobacter sp. (strain K31).